A 262-amino-acid polypeptide reads, in one-letter code: Acyl-[acyl-carrier-protein]--UDP-N-acetylglucosamine O-acyltransferase (262 aa).

This sequence belongs to the transferase hexapeptide repeat family. LpxA subfamily. As to quaternary structure, homotrimer.

Its subcellular location is the cytoplasm. It catalyses the reaction a (3R)-hydroxyacyl-[ACP] + UDP-N-acetyl-alpha-D-glucosamine = a UDP-3-O-[(3R)-3-hydroxyacyl]-N-acetyl-alpha-D-glucosamine + holo-[ACP]. It functions in the pathway glycolipid biosynthesis; lipid IV(A) biosynthesis; lipid IV(A) from (3R)-3-hydroxytetradecanoyl-[acyl-carrier-protein] and UDP-N-acetyl-alpha-D-glucosamine: step 1/6. Its function is as follows. Involved in the biosynthesis of lipid A, a phosphorylated glycolipid that anchors the lipopolysaccharide to the outer membrane of the cell. The sequence is that of Acyl-[acyl-carrier-protein]--UDP-N-acetylglucosamine O-acyltransferase from Shigella dysenteriae serotype 1 (strain Sd197).